A 288-amino-acid polypeptide reads, in one-letter code: Bifunctional protein FolD (288 aa).

NADP(+) is bound by residues 166-168 and Ile-232; that span reads GAS.

This sequence belongs to the tetrahydrofolate dehydrogenase/cyclohydrolase family. In terms of assembly, homodimer.

It carries out the reaction (6R)-5,10-methylene-5,6,7,8-tetrahydrofolate + NADP(+) = (6R)-5,10-methenyltetrahydrofolate + NADPH. The catalysed reaction is (6R)-5,10-methenyltetrahydrofolate + H2O = (6R)-10-formyltetrahydrofolate + H(+). The protein operates within one-carbon metabolism; tetrahydrofolate interconversion. Functionally, catalyzes the oxidation of 5,10-methylenetetrahydrofolate to 5,10-methenyltetrahydrofolate and then the hydrolysis of 5,10-methenyltetrahydrofolate to 10-formyltetrahydrofolate. This chain is Bifunctional protein FolD, found in Salmonella enteritidis PT4 (strain P125109).